A 388-amino-acid chain; its full sequence is Dual-specificity RNA methyltransferase RlmN (388 aa).

Glu-109 acts as the Proton acceptor in catalysis. The region spanning 115–354 is the Radical SAM core domain; that stretch reads EDDRATLCVS…TIVRKTRGDD (240 aa). Residues Cys-122 and Cys-359 are joined by a disulfide bond. The [4Fe-4S] cluster site is built by Cys-129, Cys-133, and Cys-136. Residues 183–184, Ser-215, 237–239, and Asn-316 contribute to the S-adenosyl-L-methionine site; these read GE and SLH. The active-site S-methylcysteine intermediate is the Cys-359.

It belongs to the radical SAM superfamily. RlmN family. The cofactor is [4Fe-4S] cluster.

The protein localises to the cytoplasm. The enzyme catalyses adenosine(2503) in 23S rRNA + 2 reduced [2Fe-2S]-[ferredoxin] + 2 S-adenosyl-L-methionine = 2-methyladenosine(2503) in 23S rRNA + 5'-deoxyadenosine + L-methionine + 2 oxidized [2Fe-2S]-[ferredoxin] + S-adenosyl-L-homocysteine. It carries out the reaction adenosine(37) in tRNA + 2 reduced [2Fe-2S]-[ferredoxin] + 2 S-adenosyl-L-methionine = 2-methyladenosine(37) in tRNA + 5'-deoxyadenosine + L-methionine + 2 oxidized [2Fe-2S]-[ferredoxin] + S-adenosyl-L-homocysteine. In terms of biological role, specifically methylates position 2 of adenine 2503 in 23S rRNA and position 2 of adenine 37 in tRNAs. m2A2503 modification seems to play a crucial role in the proofreading step occurring at the peptidyl transferase center and thus would serve to optimize ribosomal fidelity. The chain is Dual-specificity RNA methyltransferase RlmN from Salmonella arizonae (strain ATCC BAA-731 / CDC346-86 / RSK2980).